The chain runs to 504 residues: Terminase, large subunit (504 aa).

Residues 1 to 204 form an ATPase activity region; that stretch reads MTRGERVIAF…LSIWIDDAVK (204 aa). The Walker A motif motif lies at 54 to 61; sequence IARKNGKT. Residues 149-154 carry the Walker B motif motif; it reads LAILDE. A nuclease activity region spans residues 326–415; that stretch reads FPFFWTPQKT…LPLVEFGQGF (90 aa). Residue aspartate 471 participates in Mg(2+) binding.

It belongs to the Hendrixvirinae large terminase family. Homopentamer; forms a ring-like structure through which genomic DNA is translocated into the capsid. Interacts with the terminase small subunit; the active complex is composed of a pentamer ring of terminase large subunits and a nonamer ring of terminase small subunits. Interacts with the portal protein; this interaction allows the packaging of viral DNA. Mg(2+) serves as cofactor. Requires Mn(2+) as cofactor.

With respect to regulation, inhibited by zinc. Its function is as follows. The terminase large subunit acts as an ATP driven molecular motor necessary for viral DNA translocation into empty capsids and as an endonuclease that cuts the viral genome from the concetamer to initiate and to end a packaging reaction. The terminase lies at a unique vertex of the procapsid and is composed of two subunits, a small terminase subunit involved in viral DNA recognition (packaging sequence), and a large terminase subunit possessing endonucleolytic and ATPase activities. Both terminase subunits heterooligomerize and are docked on the portal protein to form the packaging machine. Packaging initiates by TerS recognizing the packaging sequence in the viral DNA. The nuclease activity of TerL cuts the viral DNA and the terminase-DNA complex binds to the portal of a procapsid shell. DNA is translocated into the capsid, powered by the packaging ATPase in TerL, which continues until the next site is encountered at which point the motor stops and again cuts the DNA to release the nucleocapsid filled with a unit-length genome ('unit length' packaging). The sequence is that of Terminase, large subunit (2) from Escherichia coli (Bacteriophage HK97).